The following is a 311-amino-acid chain: uncharacterized protein (311 aa).

Residues 168 to 188 (FNVMKGAILGLPIIGGIIVGV) traverse the membrane as a helical segment.

The protein resides in the cell membrane. This is an uncharacterized protein from Edwardsiella tarda.